A 769-amino-acid polypeptide reads, in one-letter code: TSC22 domain family protein 2 (769 aa).

4 disordered regions span residues 20–86 (AQVA…TVSP), 224–292 (HGLD…PQPM), 334–353 (AQPG…YPQP), and 520–563 (VPAP…SLPQ). Positions 28–37 (EDTESLDDPD) are enriched in acidic residues. Polar residues predominate over residues 229-252 (GTDSSLTAVSQLPPSEKMSQPTLA). A compositionally biased stretch (low complexity) spans 269 to 279 (GGAVAPSSASL). A compositionally biased stretch (low complexity) spans 531–541 (SSHTPVSRSSS). The span at 542–563 (VIQQVGSPLAQGTHSAPTSLPQ) shows a compositional bias: polar residues. Residues 691 to 725 (MYAVREEVEVLKEQIKELVERNSLLERENALLKSL) adopt a coiled-coil conformation. Positions 726-745 (SNNDQLSQLPAQQANPGSTS) are enriched in polar residues. Residues 726 to 769 (SNNDQLSQLPAQQANPGSTSQQQAMIAQPPQPTQPPQQPNVSSA) are disordered. The segment covering 754–763 (PPQPTQPPQQ) has biased composition (pro residues).

Belongs to the TSC-22/Dip/Bun family. Interacts with NRBP1. Interacts with PKM isoform M2; the interaction results in reduced nuclear levels of PKM isoform M2, leading to repression of cyclin CCND1 transcription and reduced cell growth. Interacts with WDR77. Expressed in the cortex, medulla and papilla of the kidney. In terms of tissue distribution, expressed in the kidney.

Functionally, reduces the level of nuclear PKM isoform M2 which results in repression of cyclin CCND1 transcription and reduced cell growth. In terms of biological role, may protect kidney cells from hyperosmotic stress. The chain is TSC22 domain family protein 2 from Mus musculus (Mouse).